The chain runs to 224 residues: Endonuclease NucS (224 aa).

This sequence belongs to the NucS endonuclease family.

The protein localises to the cytoplasm. In terms of biological role, cleaves both 3' and 5' ssDNA extremities of branched DNA structures. This is Endonuclease NucS from Mycolicibacterium smegmatis (strain ATCC 700084 / mc(2)155) (Mycobacterium smegmatis).